A 1409-amino-acid polypeptide reads, in one-letter code: CRISPR-associated endonuclease Cas9 (1409 aa).

Catalysis depends on Asp-31, which acts as the For RuvC-like nuclease domain. Residues Asp-31, Glu-784, and Glu-788 each contribute to the Mg(2+) site. The HNH Cas9-type domain occupies Thr-792–Leu-949. Catalysis depends on His-868, which acts as the Proton acceptor for HNH nuclease domain. His-1011 is a binding site for Mg(2+). A compositionally biased stretch (basic and acidic residues) spans Glu-1121–Lys-1130. The interval Glu-1121–Leu-1151 is disordered. Positions Ala-1137–Asn-1150 are enriched in polar residues.

Belongs to the CRISPR-associated protein Cas9 family. Subtype II-A subfamily. In terms of assembly, monomer. Binds crRNA and tracrRNA. Mg(2+) serves as cofactor.

Its activity is regulated as follows. Only has nuclease activity when bound to both gRNAs (crRNA plus tracrRNA). Its function is as follows. CRISPR (clustered regularly interspaced short palindromic repeat) is an adaptive immune system that provides protection against mobile genetic elements (viruses, transposable elements and conjugative plasmids). CRISPR clusters contain spacers, sequences complementary to antecedent mobile elements, and target invading nucleic acids. CRISPR clusters are transcribed and processed into CRISPR RNA (crRNA). In type II CRISPR systems correct processing of pre-crRNA requires a trans-encoded small RNA (tracrRNA), endogenous ribonuclease 3 (rnc) and Cas9. The tracrRNA serves as a guide for ribonuclease 3-aided processing of pre-crRNA. Cas9/crRNA/tracrRNA endonucleolytically cleaves linear or circular dsDNA target complementary to the spacer yielding blunt ends; Cas9 is inactive in the absence of the 2 guide RNAs (gRNA). Cas9 recognizes a 3'-G-rich protospacer adjacent motif (PAM, TGGTG in this organism) in the CRISPR repeat sequences to help distinguish self versus nonself, as targets within the bacterial CRISPR locus do not have PAMs. PAM recognition is also required for catalytic activity. When the CRISPR3/cas system consisting of cas9-cas1-cas2-csn2-CRISPR3 or just cas9-CRISPR3 is expressed in E.coli it prevents plasmids homologous to spacers 1 or 2 from transforming. The chain is CRISPR-associated endonuclease Cas9 from Streptococcus thermophilus.